We begin with the raw amino-acid sequence, 71 residues long: Protein CYSTEINE-RICH TRANSMEMBRANE MODULE 8 (71 aa).

Over residues 1–22 (MNQSAQNYFSVQKPSETSSGPY) the composition is skewed to polar residues. Positions 1 to 35 (MNQSAQNYFSVQKPSETSSGPYTSPPPIGYPTRDA) are disordered. Residues 48-64 (NSKGVNPEGCCAAICCC) traverse the membrane as a helical segment.

The protein belongs to the CYSTM1 family. As to expression, mostly expressed in stems, siliques, roots and flowers and, to a lower extent, in leaves.

It is found in the membrane. The protein resides in the nucleus. Functionally, involved in resistance to abiotic stress. This Arabidopsis thaliana (Mouse-ear cress) protein is Protein CYSTEINE-RICH TRANSMEMBRANE MODULE 8.